The sequence spans 1402 residues: DNA-directed RNA polymerase subunit beta' (1402 aa).

4 residues coordinate Zn(2+): cysteine 71, cysteine 73, cysteine 86, and cysteine 89. The Mg(2+) site is built by aspartate 462, aspartate 464, and aspartate 466. 4 residues coordinate Zn(2+): cysteine 808, cysteine 881, cysteine 888, and cysteine 891.

The protein belongs to the RNA polymerase beta' chain family. In terms of assembly, the RNAP catalytic core consists of 2 alpha, 1 beta, 1 beta' and 1 omega subunit. When a sigma factor is associated with the core the holoenzyme is formed, which can initiate transcription. Mg(2+) is required as a cofactor. Zn(2+) serves as cofactor.

It carries out the reaction RNA(n) + a ribonucleoside 5'-triphosphate = RNA(n+1) + diphosphate. In terms of biological role, DNA-dependent RNA polymerase catalyzes the transcription of DNA into RNA using the four ribonucleoside triphosphates as substrates. The sequence is that of DNA-directed RNA polymerase subunit beta' from Hyphomonas neptunium (strain ATCC 15444).